Here is a 992-residue protein sequence, read N- to C-terminus: ATP-dependent DNA helicase PIF7 (992 aa).

The transit peptide at 1 to 21 (MWDGPLRSRQNLRTVAKLRSS) directs the protein to the mitochondrion. 3 disordered regions span residues 20 to 43 (SSGC…GETA), 145 to 182 (TVNK…TAAS), and 190 to 209 (LDSS…AVTQ). 3 stretches are compositionally biased toward polar residues: residues 23-43 (CPLT…GETA), 173-182 (NVDNTTTAAS), and 191-208 (DSSS…QAVT). ATP is bound at residue 237 to 244 (GGAGTGKS). A DNA-binding region spans residues 651-670 (QAYVALSRCTDVANLVIENF).

It belongs to the helicase family. PIF1 subfamily. In terms of assembly, monomer. It depends on Mg(2+) as a cofactor.

It localises to the mitochondrion matrix. Its subcellular location is the kinetoplast. The catalysed reaction is Couples ATP hydrolysis with the unwinding of duplex DNA at the replication fork by translocating in the 5'-3' direction. This creates two antiparallel DNA single strands (ssDNA). The leading ssDNA polymer is the template for DNA polymerase III holoenzyme which synthesizes a continuous strand.. It carries out the reaction ATP + H2O = ADP + phosphate + H(+). In terms of biological role, DNA-dependent ATPase and 5'-3' DNA helicase required for the maintenance of mitochondrial (kinetoplast) genome stability. The polypeptide is ATP-dependent DNA helicase PIF7 (Trypanosoma brucei brucei (strain 927/4 GUTat10.1)).